Here is a 452-residue protein sequence, read N- to C-terminus: Phenylalanine-4-hydroxylase (452 aa).

Residue Ser16 is modified to Phosphoserine; by PKA. Residues 36–114 (SLIFSLKEEV…TVHELSRDKK (79 aa)) enclose the ACT domain. 3 residues coordinate Fe cation: His285, His290, and Glu330.

This sequence belongs to the biopterin-dependent aromatic amino acid hydroxylase family. As to quaternary structure, homodimer and homotetramer. Fe(2+) is required as a cofactor. Post-translationally, phosphorylation at Ser-16 increases basal activity and facilitates activation by the substrate phenylalanine.

The catalysed reaction is (6R)-L-erythro-5,6,7,8-tetrahydrobiopterin + L-phenylalanine + O2 = (4aS,6R)-4a-hydroxy-L-erythro-5,6,7,8-tetrahydrobiopterin + L-tyrosine. The protein operates within amino-acid degradation; L-phenylalanine degradation; acetoacetate and fumarate from L-phenylalanine: step 1/6. With respect to regulation, N-terminal region of PAH is thought to contain allosteric binding sites for phenylalanine and to constitute an 'inhibitory' domain that regulates the activity of a catalytic domain in the C-terminal portion of the molecule. Its function is as follows. Catalyzes the hydroxylation of L-phenylalanine to L-tyrosine. This Homo sapiens (Human) protein is Phenylalanine-4-hydroxylase (PAH).